Consider the following 297-residue polypeptide: PIH1 domain-containing protein 1 (297 aa).

This sequence belongs to the PIH1 family.

It localises to the nucleus. Involved in the assembly of C/D box small nucleolar ribonucleoprotein (snoRNP) particles. Recruits the SWI/SNF complex to the core promoter of rRNA genes and enhances pre-rRNA transcription. Mediates interaction of TELO2 with the R2TP complex which is necessary for the stability of MTOR and SMG1. Positively regulates the assembly and activity of the mTORC1 complex. The chain is PIH1 domain-containing protein 1 (pih1d1) from Xenopus laevis (African clawed frog).